The primary structure comprises 75 residues: Putative snRNP Sm-like protein (75 aa).

A Sm domain is found at 4-75; that stretch reads RPLDVIHRSL…NVLAISPTEE (72 aa).

It belongs to the snRNP Sm proteins family.

The sequence is that of Putative snRNP Sm-like protein from Pyrococcus horikoshii (strain ATCC 700860 / DSM 12428 / JCM 9974 / NBRC 100139 / OT-3).